The chain runs to 358 residues: MFDRLQAVEDRYERLTELLSDPDIVNDSKKLREYSKEQSDIQETVDTYREYKNVKEQLVDTREMLDSEKDPDMHEMVKEEFNLLKAQQEELEERLRILLIPKDPNDNKNVIMEIRGAAGGDEANIFAGDLFRMYSRYAETQGWKIDIMEATPNPMGGYKEVIFMINGQGAYSKFKFENGAHRVQRVPATESQGRIHTSTATVACLPEVEEVDVEIHEKDIRVDTFASSGAGGQSVNTTMSAVRMTHLPTGVVVSMQDERSQIKNREKAMKILRARVADMYMQEAQKEIDATRKSAVGSGDRSERIRTYNYPQNRVTDHRIGLTIQKLDQIVEGRLDEIIDTLILEEQASKLERLNDDL.

Position 233 is an N5-methylglutamine (glutamine 233).

The protein belongs to the prokaryotic/mitochondrial release factor family. In terms of processing, methylated by PrmC. Methylation increases the termination efficiency of RF1.

It is found in the cytoplasm. Peptide chain release factor 1 directs the termination of translation in response to the peptide chain termination codons UAG and UAA. The polypeptide is Peptide chain release factor 1 (Lysinibacillus sphaericus (strain C3-41)).